The chain runs to 185 residues: Ribosome-recycling factor (185 aa).

The protein belongs to the RRF family.

It localises to the cytoplasm. In terms of biological role, responsible for the release of ribosomes from messenger RNA at the termination of protein biosynthesis. May increase the efficiency of translation by recycling ribosomes from one round of translation to another. The protein is Ribosome-recycling factor of Clostridioides difficile (strain 630) (Peptoclostridium difficile).